Consider the following 353-residue polypeptide: Putative 3-oxoacyl-[acyl-carrier-protein] synthase 3 (353 aa).

Residues Cys122, His268, and Asn299 contribute to the active site.

The protein belongs to the thiolase-like superfamily. FabH family. In terms of assembly, homodimer.

The protein localises to the cytoplasm. The enzyme catalyses malonyl-[ACP] + acetyl-CoA + H(+) = 3-oxobutanoyl-[ACP] + CO2 + CoA. The protein operates within lipid metabolism; fatty acid biosynthesis. Its function is as follows. May catalyze the condensation reaction of fatty acid synthesis by the addition to an acyl acceptor of two carbons from malonyl-ACP. In Campylobacter jejuni subsp. jejuni serotype O:2 (strain ATCC 700819 / NCTC 11168), this protein is Putative 3-oxoacyl-[acyl-carrier-protein] synthase 3.